Reading from the N-terminus, the 1265-residue chain is Stromal processing peptidase, chloroplastic (1265 aa).

Residues 1–143 (MASSSSSIFT…SLRKHSQIVN (143 aa)) constitute a chloroplast transit peptide. Histidine 240 serves as a coordination point for Zn(2+). Glutamate 243 serves as the catalytic Proton acceptor. Residue histidine 244 participates in Zn(2+) binding. Glutamate 314 is an active-site residue. Glutamate 321 is a binding site for Zn(2+).

It belongs to the peptidase M16 family. The cofactor is Zn(2+).

Its subcellular location is the plastid. The protein localises to the chloroplast stroma. Functionally, cleaves presequences (transit peptides) from chloroplastic protein precursors. Initially recognizes a precursor by binding to the C-terminus of its transit peptide and then removes the transit peptide in a single endoproteolytic step. In a next step, pursues the cleavage of transit peptide to a subfragment form. The polypeptide is Stromal processing peptidase, chloroplastic (Arabidopsis thaliana (Mouse-ear cress)).